The primary structure comprises 1754 residues: Collagen alpha-1(XVIII) chain (1754 aa).

The first 23 residues, 1 to 23 (MAPYPCGCHILLLLFCCLAAARA), serve as a signal peptide directing secretion. Positions 42–104 (ATTIPEPQGP…TSAESPDAPE (63 aa)) are disordered. Positions 57 to 73 (TADTTTHVTPRNGSTEP) are enriched in polar residues. Residues Asn-68, Asn-129, and Asn-164 are each glycosylated (N-linked (GlcNAc...) asparagine). A disordered region spans residues 152 to 256 (LALAGPSSTP…APSQQLQRPD (105 aa)). The segment covering 157–169 (PSSTPQENGTTLW) has biased composition (polar residues). Positions 215 to 253 (SGRASLSSLLGGAPPWGSLQDPDSQGLSPAAAAPSQQLQ) are enriched in low complexity. The FZ domain occupies 329–446 (APAGRCLPLP…TQEDGYCVLI (118 aa)). Cystine bridges form between Cys-334-Cys-397, Cys-344-Cys-390, Cys-381-Cys-419, Cys-408-Cys-443, and Cys-412-Cys-432. The Laminin G-like domain maps to 456 to 644 (EVGLLQLLGD…IAELKVRRDP (189 aa)). Residues 645–751 (QVSPMHCLDE…RTPGGRVKEG (107 aa)) form a nonhelical region 1 (NC1) region. The tract at residues 645–1443 (QVSPMHCLDE…GPPGTMGASS (799 aa)) is disordered. Residues 672 to 681 (DARELLREET) show a composition bias toward basic and acidic residues. Thr-696 is modified (phosphothreonine). Polar residues predominate over residues 717 to 738 (QTTVASLGAQTLPGSDSVSTWD). Positions 752 to 785 (GLKGQKGEPGVPGPPGRAGPPGSPCLPGPPGLPC) are triple-helical region 1 (COL1). A compositionally biased stretch (pro residues) spans 762-789 (VPGPPGRAGPPGSPCLPGPPGLPCPVSP). Residues 786-795 (PVSPLGPAGP) are nonhelical region 2 (NC2). The interval 796–875 (ALQTVPGPQG…QGPPGPPGPS (80 aa)) is triple-helical region 2 (COL2). Residues 815-831 (TPGRDGEPGDPGEDGKP) show a composition bias toward basic and acidic residues. Over residues 833 to 846 (DTGPQGFPGTPGDV) the composition is skewed to low complexity. Positions 862-874 (PPGPQGPPGPPGP) are enriched in pro residues. A nonhelical region 3 (NC3) region spans residues 876 to 899 (FRHDKLTFIDMEGSGFGGDLEALR). Ser-889 carries an O-linked (Xyl...) (chondroitin sulfate) serine glycan. Residues 900–1021 (GPRGFPGPPG…PGPPGPPGPG (122 aa)) are triple-helical region 3 (COL3). Over residues 904 to 914 (FPGPPGPPGVP) the composition is skewed to pro residues. An N-linked (GlcNAc...) asparagine glycan is attached at Asn-926. Low complexity predominate over residues 930–942 (VPGPAGLPGVPGR). Over residues 946–961 (PGFPGLPGPPGPPGRE) the composition is skewed to pro residues. The span at 976–1003 (AGAPGHKGSKGAPGPAGARGESGLAGAP) shows a compositional bias: low complexity. A compositionally biased stretch (pro residues) spans 1005-1021 (PAGPPGPPGPPGPPGPG). Residues 1022–1044 (LPAGFDDMEGSGGPFWSTARSAD) are nonhelical region 4 (NC4). The triple-helical region 4 (COL4) stretch occupies residues 1045-1127 (GPQGPPGLPG…PGPPGPPGPV (83 aa)). A compositionally biased stretch (low complexity) spans 1053–1065 (PGLKGDPGVPGLP). Residues 1095–1109 (KGDRGSRGEKGDPGK) are compositionally biased toward basic and acidic residues. Residues 1117–1126 (LPGPPGPPGP) show a composition bias toward pro residues. The tract at residues 1128 to 1141 (VYVSEQDGSVLSVP) is nonhelical region 5 (NC5). Positions 1141-1153 (PGPEGRPGFAGFP) are enriched in low complexity. The interval 1142–1183 (GPEGRPGFAGFPGPAGPKGNLGSKGERGSPGPKGEKGEPGSI) is triple-helical region 5 (COL5). The tract at residues 1184-1196 (FSPDGGALGPAQK) is nonhelical region 6 (NC6). Residues 1197–1269 (GAKGEPGFRG…PGPPGPPGTP (73 aa)) are triple-helical region 6 (COL6). Positions 1254 to 1268 (PGPPGPPGPPGPPGT) are enriched in pro residues. A nonhelical region 7 (NC7) region spans residues 1270 to 1279 (VYDSNVFAES). A triple-helical region 7 (COL7) region spans residues 1280 to 1312 (SRPGPPGLPGNQGPPGPKGAKGEVGPPGPPGQF). The segment covering 1282–1296 (PGPPGLPGNQGPPGP) has biased composition (pro residues). The tract at residues 1313-1324 (PFDFLQLEAEMK) is nonhelical region 8 (NC8). Basic and acidic residues predominate over residues 1321 to 1341 (AEMKGEKGDRGDAGQKGERGE). Positions 1325 to 1346 (GEKGDRGDAGQKGERGEPGGGG) are triple-helical region 8 (COL8). The Cell attachment site signature appears at 1330–1332 (RGD). Positions 1347–1353 (FFGSSLP) are nonhelical region 9 (NC9). Pro residues-rich tracts occupy residues 1353–1365 (PGPP…PGPR), 1401–1414 (PPGP…PSFP), and 1424–1436 (PGPP…PGPP). The interval 1354–1411 (GPPGPPGPPGPRGYPGIPGPKGESIRGQPGPPGPQGPPGIGYEGRQGPPGPPGPPGPP) is triple-helical region 9 (COL9). Positions 1412–1424 (SFPGPHRQTISVP) are nonhelical region 10 (NC10). Residues 1425–1442 (GPPGPPGPPGPPGTMGAS) are triple-helical region 10 (COL10). The tract at residues 1443-1754 (SGVRLWATRQ…IENSFMTASK (312 aa)) is nonhelical region 11 (NC11). The interval 1456–1501 (GQVHEVPEGWLIFVAEQEELYVRVQNGFRKVQLEARTPLPRGTDNE) is non-collagenous domain 1 association domain. The segment at 1502-1571 (VAALQPPVVQ…RPARPTSPPA (70 aa)) is non-collagenous domain 1 hinge region. The interval 1511 to 1556 (QLHDSNPYPRREHPHPTARPWRADDILASPPRLPEPQPYPGAPHHS) is disordered. A compositionally biased stretch (basic and acidic residues) spans 1519–1535 (PRREHPHPTARPWRADD). A compositionally biased stretch (pro residues) spans 1541-1551 (PRLPEPQPYPG). A glycan (O-linked (GalNAc...) threonine) is linked at Thr-1567. Residues His-1572, His-1574, His-1582, and Asp-1647 each contribute to the Zn(2+) site. 2 disulfide bridges follow: Cys-1604-Cys-1744 and Cys-1706-Cys-1736.

The protein belongs to the multiplexin collagen family. As to quaternary structure, forms homotrimers. Recombinant non-collagenous domain 1 has stronger affinity to NID1, HSPG2 and laminin-1:NID1 complex and lower affinity to FBLN1 and FBLN2 than endostatin. In terms of assembly, monomeric. Interacts with KDR/VEGFR2. Interacts with the ITGA5:ITGB1 complex. Interacts with NID1, HSPG2, laminin-1:NID1 complex, FBLN1 and FBLN2. Post-translationally, prolines at the third position of the tripeptide repeating unit (G-X-Y) of the triple-helical regions are hydroxylated. Circulating endostatins are found as sialoglycoprotein and asialoglycoprotein structures. In terms of processing, undergoes proteolytic processing by CTSL/cathepsin-L and elastase-like proteases to generate both non-collagenous domain 1 trimers and endostatin monomers. In tissue extracts (brain, skeletal muscle, heart, kidney, testis and liver) predominantly bands of approximately 38 kDa are detected; recombinant non-collagenous domain 1 shows similar mobility. In vitro, several proteolytic cleavage sites in the non-collagenous domain 1 hinge region generating different endostatin-like peptides are reported. As to expression, detected in placenta (at protein level). Present in multiple organs with highest levels in liver, lung and kidney.

The protein localises to the secreted. The protein resides in the extracellular space. It localises to the extracellular matrix. Its subcellular location is the basement membrane. Its function is as follows. Probably plays a major role in determining the retinal structure as well as in the closure of the neural tube. In terms of biological role, may regulate extracellular matrix-dependent motility and morphogenesis of endothelial and non-endothelial cells; the function requires homotrimerization and implicates MAPK signaling. Potently inhibits endothelial cell proliferation and angiogenesis. May inhibit angiogenesis by binding to the heparan sulfate proteoglycans involved in growth factor signaling. Inhibits VEGFA-induced endothelial cell proliferation and migration. Seems to inhibit VEGFA-mediated signaling by blocking the interaction of VEGFA to its receptor KDR/VEGFR2. Modulates endothelial cell migration in an integrin-dependent manner implicating integrin ITGA5:ITGB1 and to a lesser extent ITGAV:ITGB3 and ITGAV:ITGB5. May negatively regulate the activity of homotrimeric non-collagenous domain 1. The sequence is that of Collagen alpha-1(XVIII) chain from Homo sapiens (Human).